A 216-amino-acid polypeptide reads, in one-letter code: Uracil phosphoribosyltransferase (216 aa).

5-phospho-alpha-D-ribose 1-diphosphate-binding positions include Arg-85, Arg-110, and 135 to 143; that span reads DPMVATGYS. Uracil contacts are provided by residues Ile-200 and 205-207; that span reads GDA. Asp-206 is a binding site for 5-phospho-alpha-D-ribose 1-diphosphate.

The protein belongs to the UPRTase family. Mg(2+) is required as a cofactor.

The catalysed reaction is UMP + diphosphate = 5-phospho-alpha-D-ribose 1-diphosphate + uracil. It participates in pyrimidine metabolism; UMP biosynthesis via salvage pathway; UMP from uracil: step 1/1. Allosterically activated by GTP. Catalyzes the conversion of uracil and 5-phospho-alpha-D-ribose 1-diphosphate (PRPP) to UMP and diphosphate. The chain is Uracil phosphoribosyltransferase from Paraburkholderia xenovorans (strain LB400).